The sequence spans 415 residues: Phosphopentomutase (415 aa).

Mn(2+)-binding residues include D10, D313, H318, D354, H355, and H366.

This sequence belongs to the phosphopentomutase family. Mn(2+) is required as a cofactor.

It localises to the cytoplasm. It catalyses the reaction 2-deoxy-alpha-D-ribose 1-phosphate = 2-deoxy-D-ribose 5-phosphate. The catalysed reaction is alpha-D-ribose 1-phosphate = D-ribose 5-phosphate. It functions in the pathway carbohydrate degradation; 2-deoxy-D-ribose 1-phosphate degradation; D-glyceraldehyde 3-phosphate and acetaldehyde from 2-deoxy-alpha-D-ribose 1-phosphate: step 1/2. Functionally, isomerase that catalyzes the conversion of deoxy-ribose 1-phosphate (dRib-1-P) and ribose 1-phosphate (Rib-1-P) to deoxy-ribose 5-phosphate (dRib-5-P) and ribose 5-phosphate (Rib-5-P), respectively. The polypeptide is Phosphopentomutase (Psychromonas ingrahamii (strain DSM 17664 / CCUG 51855 / 37)).